A 131-amino-acid chain; its full sequence is Small ribosomal subunit protein bS16 (131 aa).

The segment at 87–131 is disordered; the sequence is PGAEGTYRVPTANTKPPRIPGGGAAKAVEAPAEAPAEAETPASES. The segment covering 111 to 131 has biased composition (low complexity); that stretch reads AKAVEAPAEAPAEAETPASES.

Belongs to the bacterial ribosomal protein bS16 family.

The sequence is that of Small ribosomal subunit protein bS16 from Kineococcus radiotolerans (strain ATCC BAA-149 / DSM 14245 / SRS30216).